The following is a 630-amino-acid chain: MAVRLMKRCTCLLREATRLVPTVAPVGRLRLAGVSCKTLTSSVSSPSSGSLAELLGKEQVFTPYPEHQELDFLIEKASRPEQLLELLGSDHSLHHNHAALILIRLSYLLSEKPKEKALLAEDARFQRLVKLVDSQITCVWHGTLVKLLRSLYTLVLPQISKELQSVEQEVRWRLRRLKYKHLVFLAESCASFMKEQHSQELLAELLMHLERRWTEINDSRTLVTMMTMAGHLSESLMNHLEDKCLELVEQFGPDELRKVLVTLAAQSRRSVPLLRAISYHLVQKPFPMTKGMLLDLAYAYGKLSFHQTQVSQRLAADLLPFIPSMTPGEVARCAKSFAFLKWLNLPLFEAFTQHLLSRVQDVSLSHVCSVLLAFARLNFHPEQEEDQFFSMVHEKLDPVLGSLEPALQVDLVWALCVLQHVHETELHTVLHPGLHARFLESKSPKDQSTFQKLVHINTTALLEHPEYKGPFLPASAVAPIPSPSNKKMTPLQKELQETLKALLGNTDKGSLEVATQYGWVLDAEVLLDADGHFLPLRNFVAPHLAQPVGNQPLPPGAKRIAFLRWEFPNFNSRSKDLLGRFVLARRHVLAAGFLVVDVPYYEWLDLKSEWQKSAYLKDKMRKAMAEELAK.

The RAP domain maps to 560–618; sequence IAFLRWEFPNFNSRSKDLLGRFVLARRHVLAAGFLVVDVPYYEWLDLKSEWQKSAYLKD.

The protein belongs to the FAST kinase family. As to expression, expression detected in spleen, testis, colon, heart, smooth muscle, kidney, brain, lung, liver, brown and white adipose tissue with highest expression in testis, heart, smooth muscle and brown adipose tissue.

The protein resides in the mitochondrion matrix. Functionally, plays a role in processing of mitochondrial RNA precursors and in stabilization of a subset of mature mitochondrial RNA species, such as MT-CO1, MT-CO2, MT-CYB, MT-CO3, MT-ND3, MT-ND5 and MT-ATP8/6. May play a role in cell cycle progression. The polypeptide is FAST kinase domain-containing protein 4 (Tbrg4) (Mus musculus (Mouse)).